The primary structure comprises 117 residues: Large ribosomal subunit protein bL19 (117 aa).

It belongs to the bacterial ribosomal protein bL19 family.

In terms of biological role, this protein is located at the 30S-50S ribosomal subunit interface and may play a role in the structure and function of the aminoacyl-tRNA binding site. This Christiangramia forsetii (strain DSM 17595 / CGMCC 1.15422 / KT0803) (Gramella forsetii) protein is Large ribosomal subunit protein bL19.